We begin with the raw amino-acid sequence, 865 residues long: SWI/SNF chromatin-remodeling complex subunit sol1 (865 aa).

4 disordered regions span residues methionine 1–tyrosine 34, methionine 54–glycine 92, glutamine 116–glutamate 143, and valine 163–leucine 183. Positions serine 17 to glutamate 30 are enriched in polar residues. A compositionally biased stretch (low complexity) spans alanine 121–methionine 139. Residues alanine 188–leucine 278 form the ARID domain. Residues glutamine 288–aspartate 380 are disordered. Residues histidine 328–arginine 353 are compositionally biased toward polar residues. A compositionally biased stretch (pro residues) spans proline 356–proline 368. Phosphoserine occurs at positions 852 and 855.

It belongs to the SWI1 family. Component of the SWI/SNF global transcription activator complex composed of at least arp9, arp42, snf5, snf22, snf30, sbf59, sol1, ssr1, ssr2, ssr3, ssr4 and tfg3.

It is found in the nucleus. Component of the SWI/SNF complex, an ATP-dependent chromatin remodeling complex, required for the positive and negative regulation of gene expression of a large number of genes. It changes chromatin structure by altering DNA-histone contacts within a nucleosome, leading eventually to a change in nucleosome position, thus facilitating or repressing binding of gene-specific transcription factors. The polypeptide is SWI/SNF chromatin-remodeling complex subunit sol1 (sol1) (Schizosaccharomyces pombe (strain 972 / ATCC 24843) (Fission yeast)).